We begin with the raw amino-acid sequence, 402 residues long: NAD-dependent protein deacetylase sirtuin-7 (402 aa).

Disordered stretches follow at residues 1-25 (MAAG…REEQ) and 59-78 (VTEL…RQEE). Residues 9-25 (RSERKAAERVRRLREEQ) are compositionally biased toward basic and acidic residues. Residues 83 to 330 (PEELRRKVRE…RLLMDELGLE (248 aa)) form the Deacetylase sirtuin-type domain. NAD(+) is bound by residues 108-127 (GAGI…NGVW) and 168-171 (QNCD). Histidine 188 acts as the Proton acceptor in catalysis. Zn(2+) contacts are provided by cysteine 196, cysteine 199, cysteine 226, and cysteine 229. NAD(+)-binding positions include 269-271 (GSS), 298-300 (NLQ), and cysteine 316. The tract at residues 355–385 (SHSRKSLCRSREEPPPGDQSAPLASATPILG) is disordered. Arginine 390 is modified (asymmetric dimethylarginine; alternate). Arginine 390 bears the Omega-N-methylarginine; alternate mark.

It belongs to the sirtuin family. Class IV subfamily. In terms of assembly, interacts with UBTF and the RNA polymerase I complex. Interacts with components of the B-WICH complex, such as MYBBP1A, SMARCA5/SNF2H and BAZ1B/WSTF. Interacts with ELK4, leading to stabilization at target promoters for H3K18Ac deacetylation. Interacts with histone H2A and/or histone H2B. Interacts with DNMT1. Interacts with SIRT1. The cofactor is Zn(2+). In terms of processing, phosphorylated during mitosis. Methylation at Arg-390 by PRMT6 inhibits the H3K18Ac histone deacetylase activity, promoting mitochondria biogenesis and maintaining mitochondria respiration. Post-translationally, ubiquitinated via 'Lys-63'-linked ubiquitin chains. Deubiquitinated by USP7, inhibiting the H3K18Ac histone deacetylase activity and regulating gluconeogenesis. Ubiquitinated by E3 ubiquitin-protein ligase complex containing FBXO7; leading to proteasomal degradation.

It localises to the nucleus. The protein localises to the nucleolus. It is found in the nucleoplasm. Its subcellular location is the chromosome. The protein resides in the cytoplasm. The catalysed reaction is N(6)-acetyl-L-lysyl-[protein] + NAD(+) + H2O = 2''-O-acetyl-ADP-D-ribose + nicotinamide + L-lysyl-[protein]. The enzyme catalyses N(6)-glutaryl-L-lysyl-[protein] + NAD(+) + H2O = 2''-O-glutaryl-ADP-D-ribose + nicotinamide + L-lysyl-[protein]. It carries out the reaction N(6)-succinyl-L-lysyl-[protein] + NAD(+) + H2O = 2''-O-succinyl-ADP-D-ribose + nicotinamide + L-lysyl-[protein]. It catalyses the reaction N(6)-propanoyl-L-lysyl-[protein] + NAD(+) + H2O = 3''-O-propanoyl-ADP-D-ribose + nicotinamide + L-lysyl-[protein]. The catalysed reaction is N(6)-decanoyl-L-lysyl-[protein] + NAD(+) + H2O = 2''-O-decanoyl-ADP-D-ribose + nicotinamide + L-lysyl-[protein]. With respect to regulation, NAD-dependent protein-lysine deacetylase and deacylase activities are activated by nucleic acids. Histone deacetylase activity is activated by DNA. Protein-lysine deacylase activity is activated by RNA. H3K18Ac histone deacetylase activity is inhibited by methylation at Arg-390. H3K18Ac histone deacetylase activity is inhibited by deubiquitination by USP7. NAD-dependent protein-lysine deacylase that can act both as a deacetylase or deacylase (desuccinylase, depropionylase, deglutarylase and dedecanoylase), depending on the context. Specifically mediates deacetylation of histone H3 at 'Lys-18' (H3K18Ac). In contrast to other histone deacetylases, displays strong preference for a specific histone mark, H3K18Ac, directly linked to control of gene expression. H3K18Ac is mainly present around the transcription start site of genes and has been linked to activation of nuclear hormone receptors; SIRT7 thereby acts as a transcription repressor. Moreover, H3K18 hypoacetylation has been reported as a marker of malignancy in various cancers and seems to maintain the transformed phenotype of cancer cells. Also able to mediate deacetylation of histone H3 at 'Lys-36' (H3K36Ac) in the context of nucleosomes. Also mediates deacetylation of non-histone proteins, such as ATM, CDK9, DDX21, DDB1, FBL, FKBP5/FKBP51, GABPB1, RAN, RRP9/U3-55K and POLR1E/PAF53. Enriched in nucleolus where it stimulates transcription activity of the RNA polymerase I complex. Acts by mediating the deacetylation of the RNA polymerase I subunit POLR1E/PAF53, thereby promoting the association of RNA polymerase I with the rDNA promoter region and coding region. In response to metabolic stress, SIRT7 is released from nucleoli leading to hyperacetylation of POLR1E/PAF53 and decreased RNA polymerase I transcription. Required to restore the transcription of ribosomal RNA (rRNA) at the exit from mitosis. Promotes pre-ribosomal RNA (pre-rRNA) cleavage at the 5'-terminal processing site by mediating deacetylation of RRP9/U3-55K, a core subunit of the U3 snoRNP complex. Mediates 'Lys-37' deacetylation of Ran, thereby regulating the nuclear export of NF-kappa-B subunit RELA/p65. Acts as a regulator of DNA damage repair by mediating deacetylation of ATM during the late stages of DNA damage response, promoting ATM dephosphorylation and deactivation. Suppresses the activity of the DCX (DDB1-CUL4-X-box) E3 ubiquitin-protein ligase complexes by mediating deacetylation of DDB1, which prevents the interaction between DDB1 and CUL4 (CUL4A or CUL4B). Activates RNA polymerase II transcription by mediating deacetylation of CDK9, thereby promoting 'Ser-2' phosphorylation of the C-terminal domain (CTD) of RNA polymerase II. Deacetylates FBL, promoting histone-glutamine methyltransferase activity of FBL. Acts as a regulator of mitochondrial function by catalyzing deacetylation of GABPB1. Regulates Akt/AKT1 activity by mediating deacetylation of FKBP5/FKBP51. Required to prevent R-loop-associated DNA damage and transcription-associated genomic instability by mediating deacetylation and subsequent activation of DDX21, thereby overcoming R-loop-mediated stalling of RNA polymerases. In addition to protein deacetylase activity, also acts as a protein-lysine deacylase. Acts as a protein depropionylase by mediating depropionylation of Osterix (SP7), thereby regulating bone formation by osteoblasts. Acts as a histone deglutarylase by mediating deglutarylation of histone H4 on 'Lys-91' (H4K91glu); a mark that destabilizes nucleosomes by promoting dissociation of the H2A-H2B dimers from nucleosomes. Acts as a histone desuccinylase: in response to DNA damage, recruited to DNA double-strand breaks (DSBs) and catalyzes desuccinylation of histone H3 on 'Lys-122' (H3K122succ), thereby promoting chromatin condensation and DSB repair. Also promotes DSB repair by promoting H3K18Ac deacetylation, regulating non-homologous end joining (NHEJ). Along with its role in DNA repair, required for chromosome synapsis during prophase I of female meiosis by catalyzing H3K18Ac deacetylation. Involved in transcriptional repression of LINE-1 retrotransposon via H3K18Ac deacetylation, and promotes their association with the nuclear lamina. Required to stabilize ribosomal DNA (rDNA) heterochromatin and prevent cellular senescence induced by rDNA instability. Acts as a negative regulator of SIRT1 by preventing autodeacetylation of SIRT1, restricting SIRT1 deacetylase activity. This is NAD-dependent protein deacetylase sirtuin-7 from Rattus norvegicus (Rat).